Reading from the N-terminus, the 219-residue chain is Cytochrome c biogenesis ATP-binding export protein CcmA (219 aa).

The region spanning isoleucine 10–valine 218 is the ABC transporter domain. Position 42-49 (glycine 42–threonine 49) interacts with ATP.

This sequence belongs to the ABC transporter superfamily. CcmA exporter (TC 3.A.1.107) family. As to quaternary structure, the complex is composed of two ATP-binding proteins (CcmA) and two transmembrane proteins (CcmB).

The protein resides in the cell inner membrane. It carries out the reaction heme b(in) + ATP + H2O = heme b(out) + ADP + phosphate + H(+). Its function is as follows. Part of the ABC transporter complex CcmAB involved in the biogenesis of c-type cytochromes; once thought to export heme, this seems not to be the case, but its exact role is uncertain. Responsible for energy coupling to the transport system. The sequence is that of Cytochrome c biogenesis ATP-binding export protein CcmA from Colwellia psychrerythraea (strain 34H / ATCC BAA-681) (Vibrio psychroerythus).